Reading from the N-terminus, the 619-residue chain is MQLLLIHSDFIEFEAKKPTKFAEEVPEEARSGRLDEALCAFIAVEKFDEDDPDAVVAQAAGEIEEVAKRVKAERIMLYPYAHLSSALSSPETAVRVLRDLESTLKSSFEVARAPFGWYKSFTIRCKGHPLSELSRSIRIGEGEVVSQALKSEAKAVSHWRIMKKGGEMVPPEEFDFRGHERLEKFVRYEIEKSRAVDRIPPHVELMRRLELVDYEPGSDPGNMRYYPKGRLVKSLLESYVTDRALEMGAMEVETPVMYDMDHPTLKKYLDRFPARQYAIEADKKHLFLRFAACFGQFLMGHDMTFSYRSLPLRMFELTRYSFRREQRGELVGLRRLRAFTMPDMHTFCGDMSSAMEEFRKQYEASISVLRDAGLDLKDYEVAIRFTKDFYENNKTFIEGLVDIVDKPVLIEMWDERFFYFVLKFEFNFVDALDKASALSTVQIDVENAERYDIGYVDAEGNRQRPIILHCSPSGAIERLMYALLEKQAMIAANGGLPMLPTWLSPTQVRIIPVAERHHARAMEVAEQLNFRVDVDDRDETVGKKIRDAGREWVPYVAVVGDEELSTGLLTVTVRSESTSNQKIKMSVEELRARLQSETAGRPWRRLPLPVRLSERPKFV.

The segment at 1-143 (MQLLLIHSDF…SRSIRIGEGE (143 aa)) is editing domain. The tract at residues 201–500 (PHVELMRRLE…AANGGLPMLP (300 aa)) is catalytic. Zn(2+) contacts are provided by C293, H345, and H469.

This sequence belongs to the class-II aminoacyl-tRNA synthetase family. Homodimer. It depends on Zn(2+) as a cofactor.

It localises to the cytoplasm. It carries out the reaction tRNA(Thr) + L-threonine + ATP = L-threonyl-tRNA(Thr) + AMP + diphosphate + H(+). Catalyzes the attachment of threonine to tRNA(Thr) in a two-step reaction: L-threonine is first activated by ATP to form Thr-AMP and then transferred to the acceptor end of tRNA(Thr). Also edits incorrectly charged L-seryl-tRNA(Thr). This Methanothrix thermoacetophila (strain DSM 6194 / JCM 14653 / NBRC 101360 / PT) (Methanosaeta thermophila) protein is Threonine--tRNA ligase.